Consider the following 87-residue polypeptide: Protein OPG096 (87 aa).

A run of 2 helical transmembrane segments spans residues 39-59 (PLIR…IFTV) and 67-87 (QMLL…YFIL).

It belongs to the orthopoxvirus OPG096 family. As to quaternary structure, interacts with OPG158.

Its subcellular location is the virion membrane. The protein localises to the host cytoplasm. The protein resides in the host endoplasmic reticulum membrane. In terms of biological role, early protein involved in virion morphogenesis. Participates in the formation and elongation of crescent-shaped membrane precursors of immature virions in cytoplasmic factories. This chain is Protein OPG096 (OPG096), found in Homo sapiens (Human).